A 483-amino-acid polypeptide reads, in one-letter code: Cysteine proteinase 1, mitochondrial (483 aa).

Residues 1–30 (MLPTSVSRSLYLKTFRSHLLRAPQIVLKRM) constitute a mitochondrion transit peptide. Residues Cys102, His398, and Asn421 contribute to the active site. Position 483 (Lys483) is a propeptide, removed in mature form; by autocatalysis.

This sequence belongs to the peptidase C1 family. As to quaternary structure, homohexamer. Binds to nucleic acids. Binds single-stranded DNA and RNA with higher affinity than double-stranded DNA. In terms of processing, the N-terminus of isoform Cytoplasmic is blocked.

Its subcellular location is the mitochondrion. The protein resides in the cytoplasm. It catalyses the reaction Inactivates bleomycin B2 (a cytotoxic glycometallopeptide) by hydrolysis of a carboxyamide bond of beta-aminoalanine, but also shows general aminopeptidase activity. The specificity varies somewhat with source, but amino acid arylamides of Met, Leu and Ala are preferred.. With respect to regulation, inhibited by E64, a specific inhibitor of cysteine proteases, N-ethylmaleimide, iodacetamide, and mercury and zinc ions. Its function is as follows. The normal physiological role of the enzyme is unknown, but it is not essential for the viability of yeast cells. Has aminopeptidase activity, shortening substrate peptides sequentially by 1 amino acid. Has bleomycin hydrolase activity, which can protect the cell from the toxic effects of bleomycin. Has homocysteine-thiolactonase activity, protecting the cell against homocysteine toxicity. Acts as a repressor in the GAL4 regulatory system, but this does not require either the peptidase or nucleic acid-binding activities. This chain is Cysteine proteinase 1, mitochondrial (LAP3), found in Saccharomyces cerevisiae (strain JAY291) (Baker's yeast).